Reading from the N-terminus, the 916-residue chain is Protein translocase subunit SecA (916 aa).

Residues Q87, 105–109, and D512 contribute to the ATP site; that span reads GEGKT. The interval 857 to 916 is disordered; sequence QHAEAPSMEQAVAGEEEELPEGPAPVVPLEPVRNEQKIGRNEPCPCGSGKKYKHCHGQLD. The Zn(2+) site is built by C900, C902, C911, and H912. The span at 906 to 916 shows a compositional bias: basic residues; sequence KKYKHCHGQLD.

Belongs to the SecA family. In terms of assembly, monomer and homodimer. Part of the essential Sec protein translocation apparatus which comprises SecA, SecYEG and auxiliary proteins SecDF-YajC and YidC. The cofactor is Zn(2+).

The protein resides in the cell inner membrane. It is found in the cytoplasm. It carries out the reaction ATP + H2O + cellular proteinSide 1 = ADP + phosphate + cellular proteinSide 2.. Its function is as follows. Part of the Sec protein translocase complex. Interacts with the SecYEG preprotein conducting channel. Has a central role in coupling the hydrolysis of ATP to the transfer of proteins into and across the cell membrane, serving both as a receptor for the preprotein-SecB complex and as an ATP-driven molecular motor driving the stepwise translocation of polypeptide chains across the membrane. The protein is Protein translocase subunit SecA of Pseudomonas aeruginosa (strain LESB58).